The primary structure comprises 179 residues: Protein GrpE (179 aa).

A disordered region spans residues 1 to 22; that stretch reads MTDNNIENNEEEIRKAPSANDR. A compositionally biased stretch (basic and acidic residues) spans 11 to 22; sequence EEIRKAPSANDR.

This sequence belongs to the GrpE family. In terms of assembly, homodimer.

The protein resides in the cytoplasm. Functionally, participates actively in the response to hyperosmotic and heat shock by preventing the aggregation of stress-denatured proteins, in association with DnaK and GrpE. It is the nucleotide exchange factor for DnaK and may function as a thermosensor. Unfolded proteins bind initially to DnaJ; upon interaction with the DnaJ-bound protein, DnaK hydrolyzes its bound ATP, resulting in the formation of a stable complex. GrpE releases ADP from DnaK; ATP binding to DnaK triggers the release of the substrate protein, thus completing the reaction cycle. Several rounds of ATP-dependent interactions between DnaJ, DnaK and GrpE are required for fully efficient folding. The sequence is that of Protein GrpE from Rickettsia canadensis (strain McKiel).